Consider the following 155-residue polypeptide: Snaclec clone 2100755 (155 aa).

Positions 1–23 (MGRFIFVSFGLLVVFLSLSGTAA) are cleaved as a signal peptide. Disulfide bonds link C25–C36, C53–C144, and C119–C136. The 114-residue stretch at 32 to 145 (YDGHCYQVFS…CEKSVSFVCK (114 aa)) folds into the C-type lectin domain.

This sequence belongs to the snaclec family. Heterodimer; disulfide-linked.

It is found in the secreted. Functionally, interferes with one step of hemostasis (modulation of platelet aggregation, or coagulation cascade, for example). This chain is Snaclec clone 2100755, found in Deinagkistrodon acutus (Hundred-pace snake).